The following is a 64-amino-acid chain: Large ribosomal subunit protein bL35 (64 aa).

This sequence belongs to the bacterial ribosomal protein bL35 family.

The sequence is that of Large ribosomal subunit protein bL35 from Vibrio atlanticus (strain LGP32) (Vibrio splendidus (strain Mel32)).